The chain runs to 78 residues: TP53-regulated inhibitor of apoptosis 1-A (78 aa).

The stretch at 1 to 52 forms a coiled coil; it reads MNSVGEECTDMKRDYDQCFNRWFAEKFLKGAGSGDPCTELFRRYRECVQKAI. Positions 5 to 55 constitute a CHCH domain; sequence GEECTDMKRDYDQCFNRWFAEKFLKGAGSGDPCTELFRRYRECVQKAIKDK. 2 consecutive short sequence motifs (cx9C motif) follow at residues 8–18 and 37–47; these read CTDMKRDYDQC and CTELFRRYREC. Cystine bridges form between Cys8–Cys47 and Cys18–Cys37.

It belongs to the TRIAP1/MDM35 family. In terms of assembly, monomer. Forms a complex with prelid1 in the mitochondrion intermembrane space. Interacts with prelid3a.

Its subcellular location is the mitochondrion. It is found in the mitochondrion intermembrane space. The catalysed reaction is a 1,2-diacyl-sn-glycero-3-phosphate(in) = a 1,2-diacyl-sn-glycero-3-phosphate(out). Functionally, involved in the modulation of the mitochondrial apoptotic pathway by ensuring the accumulation of cardiolipin (CL) in mitochondrial membranes. The triap1:prelid1 complex probably functions as a phosphatidic acid (PA) transporter across the mitochondrion intermembrane space to provide PA for cardiolipin CL synthesis in the inner membrane. Likewise, the triap1:prelid3a complex mediates the transfer of phosphatidic acid (PA) between liposomes (in vitro) and probably functions as a PA transporter across the mitochondrion intermembrane space (in vivo). Mediates cell survival by inhibiting activation of caspase-9 which prevents induction of apoptosis. Required for pronephros development; probably involved at an early stage in the formation of pronephric components derived from the somatic layer. The sequence is that of TP53-regulated inhibitor of apoptosis 1-A (triap1-a) from Xenopus laevis (African clawed frog).